We begin with the raw amino-acid sequence, 538 residues long: MFS-type transporter oryC (538 aa).

6 helical membrane-spanning segments follow: residues 14-34 (LTGG…MSLF), 67-87 (TVTA…FTIG), 96-116 (ILLG…SFSL), 120-140 (FVGR…APIW), 162-182 (IFGF…GGSI), and 186-206 (FPLA…PWLP). Asn-268 carries an N-linked (GlcNAc...) asparagine glycan. The next 6 helical transmembrane spans lie at 288–308 (FGGI…SVGL), 315–335 (LLAA…VLLV), 342–362 (GLML…TILL), 379–399 (VAFF…VPWL), 416–436 (VATA…PIGI), and 443–463 (FWIV…FLYP). An N-linked (GlcNAc...) asparagine glycan is attached at Asn-467.

The protein belongs to the major facilitator superfamily. Sugar transporter (TC 2.A.1.1) family.

Its subcellular location is the membrane. Functionally, MFS-type transporter; part of the gene cluster that mediates the biosynthesis of oryzines, natural products with an unusual maleidride backbone. The chain is MFS-type transporter oryC from Aspergillus oryzae (strain ATCC 42149 / RIB 40) (Yellow koji mold).